The chain runs to 425 residues: Aromatic prenyl transferase PC-22 (425 aa).

L-tryptophan is bound by residues 83–84 (GI) and glutamate 92. Substrate-binding residues include arginine 107, lysine 198, tyrosine 200, arginine 265, lysine 267, tyrosine 269, tyrosine 345, tyrosine 410, and tyrosine 414.

It belongs to the tryptophan dimethylallyltransferase family. As to quaternary structure, homodimer.

It participates in secondary metabolite biosynthesis. Its function is as follows. Aromatic prenyl transferase; part of the gene cluster that mediates the biosynthesis of the indole diterpenes penitrems. The geranylgeranyl diphosphate (GGPP) synthase penG catalyzes the first step in penitrem biosynthesis via conversion of farnesyl pyrophosphate and isopentyl pyrophosphate into geranylgeranyl pyrophosphate (GGPP). Condensation of indole-3-glycerol phosphate with GGPP by the prenyl transferase penC then forms 3-geranylgeranylindole (3-GGI). Epoxidation by the FAD-dependent monooxygenase penM leads to a epoxidized-GGI that is substrate of the terpene cyclase penB for cyclization to yield paspaline. Paspaline is subsequently converted to 13-desoxypaxilline by the cytochrome P450 monooxygenase penP, the latter being then converted to paxilline by the cytochrome P450 monooxygenase penQ. Paxilline is converted to beta-paxitriol via C-10 ketoreduction by the short-chain dehydrogenase PC-15 which can be monoprenylated at the C-20 by the indole diterpene prenyltransferase penD. A two-step elimination (acetylation and elimination) process performed by the O-acetyltransferase PC-16 and the P.simplicissimum ptmI-ortholog not yet identified in P.crustosum, leads to the production of the prenylated form of penijanthine. The FAD-linked oxidoreductase ptmO then converts the prenylated form of penijanthine into PC-M5 which is in turn transformed into PC-M4 by the aromatic dimethylallyltransferase PC-22. A series of oxidation steps involving 4 cytochrome P450 monooxygenases (PC-21, PC-05, PC-23, PC-20) and a FAD-dependent monooxygenase (PC-14) are required for the transformation of PC-M4 to penitrems A and E. Synthesis of these final products is proposed to proceed via penitrems D and C (PC-21, PC-05, PC-14) and penitrems B and F (PC-21, PC-05, PC-14, PC-23). The chain is Aromatic prenyl transferase PC-22 from Penicillium crustosum (Blue mold fungus).